Here is a 433-residue protein sequence, read N- to C-terminus: 3-phosphoshikimate 1-carboxyvinyltransferase (433 aa).

The 3-phosphoshikimate site is built by Lys15, Ser16, and Arg20. Residue Lys15 coordinates phosphoenolpyruvate. Gly96 and Arg124 together coordinate phosphoenolpyruvate. Ser169, Gln171, Ser195, Asp318, and Lys345 together coordinate 3-phosphoshikimate. Gln171 contacts phosphoenolpyruvate. The active-site Proton acceptor is Asp318. Residues Arg349 and Arg393 each contribute to the phosphoenolpyruvate site.

The protein belongs to the EPSP synthase family. In terms of assembly, monomer.

The protein localises to the cytoplasm. It catalyses the reaction 3-phosphoshikimate + phosphoenolpyruvate = 5-O-(1-carboxyvinyl)-3-phosphoshikimate + phosphate. The protein operates within metabolic intermediate biosynthesis; chorismate biosynthesis; chorismate from D-erythrose 4-phosphate and phosphoenolpyruvate: step 6/7. Functionally, catalyzes the transfer of the enolpyruvyl moiety of phosphoenolpyruvate (PEP) to the 5-hydroxyl of shikimate-3-phosphate (S3P) to produce enolpyruvyl shikimate-3-phosphate and inorganic phosphate. The sequence is that of 3-phosphoshikimate 1-carboxyvinyltransferase from Chlorobium luteolum (strain DSM 273 / BCRC 81028 / 2530) (Pelodictyon luteolum).